The sequence spans 257 residues: DNA repair protein RecO (257 aa).

The protein belongs to the RecO family.

In terms of biological role, involved in DNA repair and RecF pathway recombination. This is DNA repair protein RecO from Streptococcus thermophilus (strain ATCC BAA-491 / LMD-9).